A 205-amino-acid chain; its full sequence is uncharacterized protein (205 aa).

This is an uncharacterized protein from Saccharomyces cerevisiae (strain ATCC 204508 / S288c) (Baker's yeast).